The following is a 554-amino-acid chain: NADH-ubiquinone oxidoreductase chain 5 (554 aa).

Helical transmembrane passes span 6-26 (VCGI…LYLL), 57-77 (LMFI…SISY), 93-113 (ILFL…SIIL), 150-170 (IGLL…LSFY), 175-197 (FMMI…STWL), 209-228 (SLVH…IRYV), 238-258 (YIML…NFEL), 263-283 (VVAY…SIGS), 286-306 (LVFL…MCVG), 332-352 (SMIL…VGYY), 379-399 (IFTV…FLMM), 409-429 (IMCI…KLIF), 441-461 (LLMI…IMGF), 480-500 (FLFM…MMFT), and 532-552 (LMIN…IYLI).

The protein belongs to the complex I subunit 5 family.

It localises to the mitochondrion inner membrane. The catalysed reaction is a ubiquinone + NADH + 5 H(+)(in) = a ubiquinol + NAD(+) + 4 H(+)(out). Core subunit of the mitochondrial membrane respiratory chain NADH dehydrogenase (Complex I) that is believed to belong to the minimal assembly required for catalysis. Complex I functions in the transfer of electrons from NADH to the respiratory chain. The immediate electron acceptor for the enzyme is believed to be ubiquinone. The polypeptide is NADH-ubiquinone oxidoreductase chain 5 (ND5) (Apis mellifera ligustica (Common honeybee)).